We begin with the raw amino-acid sequence, 336 residues long: RHOMBOID-like protein 12, mitochondrial (336 aa).

Residues 1–85 constitute a mitochondrion transit peptide; it reads MKAIFNRRVV…RGFFASALGN (85 aa). Helical transmembrane passes span 135–155, 185–205, 216–236, 254–274, 276–296, and 307–327; these read VVLG…VFNQ, IDIG…TSIA, LYLA…AYMA, PGLG…FLHP, ATLY…IFLI, and NSNI…IAWA. S259 (nucleophile) is an active-site residue. The active-site Charge relay system is H315.

Belongs to the peptidase S54 family.

Its subcellular location is the mitochondrion membrane. Functionally, probable rhomboid-type serine protease that catalyzes intramembrane proteolysis. Unable to cleave either of the yeast Pcp1 substrates in yeast cells. This chain is RHOMBOID-like protein 12, mitochondrial, found in Arabidopsis thaliana (Mouse-ear cress).